We begin with the raw amino-acid sequence, 391 residues long: Sister chromatid cohesion protein DCC1 (391 aa).

This sequence belongs to the DCC1 family. Component of the ctf18-RFC complex which consists of ctf18, ctf8, dscc1 and the RFC complex.

The protein resides in the nucleus. Functionally, loads pcna onto primed templates regulating velocity, spacing and restart activity of replication forks. May couple DNA replication to sister chromatid cohesion. This chain is Sister chromatid cohesion protein DCC1 (dscc1), found in Xenopus tropicalis (Western clawed frog).